Consider the following 192-residue polypeptide: Phosphoheptose isomerase (192 aa).

The region spanning 37–192 (LADSFKAGGK…IQLIEKEMVK (156 aa)) is the SIS domain. 52–54 (NGG) provides a ligand contact to substrate. 2 residues coordinate Zn(2+): His61 and Glu65. Substrate contacts are provided by residues Glu65, 93–94 (ND), 119–121 (STS), Ser124, and Gln172. Zn(2+) contacts are provided by Gln172 and His180.

The protein belongs to the SIS family. GmhA subfamily. Homotetramer. The cofactor is Zn(2+).

The protein resides in the cytoplasm. It carries out the reaction 2 D-sedoheptulose 7-phosphate = D-glycero-alpha-D-manno-heptose 7-phosphate + D-glycero-beta-D-manno-heptose 7-phosphate. It functions in the pathway carbohydrate biosynthesis; D-glycero-D-manno-heptose 7-phosphate biosynthesis; D-glycero-alpha-D-manno-heptose 7-phosphate and D-glycero-beta-D-manno-heptose 7-phosphate from sedoheptulose 7-phosphate: step 1/1. In terms of biological role, catalyzes the isomerization of sedoheptulose 7-phosphate in D-glycero-D-manno-heptose 7-phosphate. The sequence is that of Phosphoheptose isomerase from Salmonella agona (strain SL483).